Consider the following 582-residue polypeptide: ATP-dependent lipid A-core flippase (582 aa).

Helical transmembrane passes span 16 to 36 (LWPT…ALIL), 64 to 84 (LMWM…TSYI), 153 to 173 (IIGL…ILIV), 253 to 273 (PIIQ…ASFP), and 275 to 295 (VMDS…IALM). The region spanning 28-310 (IVAGVALILN…LTNVNAQFQR (283 aa)) is the ABC transmembrane type-1 domain. Residues 342 to 578 (VEFRNVTFTY…RGVYAQLHKM (237 aa)) form the ABC transporter domain. An ATP-binding site is contributed by 376-383 (GRSGSGKS).

This sequence belongs to the ABC transporter superfamily. Lipid exporter (TC 3.A.1.106) family. Homodimer.

It is found in the cell inner membrane. It carries out the reaction ATP + H2O + lipid A-core oligosaccharideSide 1 = ADP + phosphate + lipid A-core oligosaccharideSide 2.. Involved in lipopolysaccharide (LPS) biosynthesis. Translocates lipid A-core from the inner to the outer leaflet of the inner membrane. Transmembrane domains (TMD) form a pore in the inner membrane and the ATP-binding domain (NBD) is responsible for energy generation. The protein is ATP-dependent lipid A-core flippase of Escherichia coli O6:K15:H31 (strain 536 / UPEC).